The primary structure comprises 438 residues: C4-dicarboxylate transport protein 1 (438 aa).

A run of 8 helical transmembrane segments spans residues 20 to 42 (LYVQVLIAILIGAMVGCLWPSVA), 57 to 77 (LIKMVIAPIIFCTVTSGIAHI), 90 to 112 (ALFYFEIVSSFALLLGLAMGNLV), 160 to 179 (VLQVLLFAILFGFSLMALGK), 192 to 214 (AHAVFGVIAIVMKAAPIGAFGAM), 229 to 251 (LIGLIALFYVTAALFVVVVLGLI), 324 to 346 (LFIAQALGVDLSFGQQLTILLVA), and 361 to 383 (FITLAATLSVVNPALVPGMAIVF).

It belongs to the dicarboxylate/amino acid:cation symporter (DAACS) (TC 2.A.23) family.

The protein resides in the cell inner membrane. Functionally, responsible for the transport of dicarboxylates such as succinate, fumarate, and malate from the periplasm across the membrane. The chain is C4-dicarboxylate transport protein 1 from Bradyrhizobium diazoefficiens (strain JCM 10833 / BCRC 13528 / IAM 13628 / NBRC 14792 / USDA 110).